A 334-amino-acid chain; its full sequence is N-acetyl-gamma-glutamyl-phosphate reductase (334 aa).

Residue Cys154 is part of the active site.

It belongs to the NAGSA dehydrogenase family. Type 1 subfamily.

The protein resides in the cytoplasm. It catalyses the reaction N-acetyl-L-glutamate 5-semialdehyde + phosphate + NADP(+) = N-acetyl-L-glutamyl 5-phosphate + NADPH + H(+). It participates in amino-acid biosynthesis; L-arginine biosynthesis; N(2)-acetyl-L-ornithine from L-glutamate: step 3/4. Its function is as follows. Catalyzes the NADPH-dependent reduction of N-acetyl-5-glutamyl phosphate to yield N-acetyl-L-glutamate 5-semialdehyde. The polypeptide is N-acetyl-gamma-glutamyl-phosphate reductase (Buchnera aphidicola subsp. Schizaphis graminum (strain Sg)).